A 263-amino-acid chain; its full sequence is Cobalt-precorrin-6A reductase (263 aa).

Belongs to the precorrin-6x reductase family.

The enzyme catalyses Co-precorrin-6B + NAD(+) = Co-precorrin-6A + NADH + H(+). It functions in the pathway cofactor biosynthesis; adenosylcobalamin biosynthesis; cob(II)yrinate a,c-diamide from sirohydrochlorin (anaerobic route): step 7/10. Its function is as follows. Catalyzes the reduction of the macrocycle of cobalt-precorrin-6A to cobalt-precorrin-6B. The polypeptide is Cobalt-precorrin-6A reductase (cbiJ) (Salmonella typhimurium (strain LT2 / SGSC1412 / ATCC 700720)).